Reading from the N-terminus, the 164-residue chain is MPEQLKQRVETCYQQAEAFFKRRFPRPEVSFKLRGQKAGVAHLHENLLRFNLQLYRENQEDFLRQTVAHEVAHLVAHQLFGDRIQAHGEEWQLIMRGVYELPPNRCHNYDVQRRAVTRYIYRCPCPQSDFPFTAQRHKLVHQGRRYLCKRCREILVYSGETRVE.

The SprT-like domain occupies 13–156 (YQQAEAFFKR…LCKRCREILV (144 aa)). Residue H69 participates in Zn(2+) binding. The active site involves E70. Position 73 (H73) interacts with Zn(2+).

It belongs to the SprT family. Zn(2+) is required as a cofactor.

The protein resides in the cytoplasm. The protein is Protein SprT of Pseudomonas putida (strain ATCC 700007 / DSM 6899 / JCM 31910 / BCRC 17059 / LMG 24140 / F1).